A 290-amino-acid polypeptide reads, in one-letter code: Poly-beta-1,6-N-acetyl-D-glucosamine N-deacetylase (290 aa).

A signal peptide spans 1–28 (MKYRKLIILVLSILIILPVSTLDGHHIA). Residues 114–290 (RSVWINFDDM…KRWDGFHEKD (177 aa)) enclose the NodB homology domain.

This sequence belongs to the polysaccharide deacetylase family.

It is found in the secreted. The protein localises to the cell wall. In terms of biological role, catalyzes the N-deacetylation of poly-beta-1,6-N-acetyl-D-glucosamine (PNAG, also referred to as PIA), a biofilm adhesin polysaccharide. N-deacetylation is crucial for attachment of the polysaccharide to the bacterial cell surface; it leads to the introduction of positive charges in the otherwise neutral PIA polymer, allowing electrostatic interactions. In Staphylococcus aureus (strain Mu50 / ATCC 700699), this protein is Poly-beta-1,6-N-acetyl-D-glucosamine N-deacetylase (icaB).